We begin with the raw amino-acid sequence, 444 residues long: Adenylosuccinate synthetase (444 aa).

GTP contacts are provided by residues glycine 12–lysine 18 and glycine 40–threonine 42. Residue aspartate 13 is the Proton acceptor of the active site. Mg(2+)-binding residues include aspartate 13 and glycine 40. IMP is bound by residues aspartate 13–lysine 16, asparagine 38–histidine 41, threonine 128, arginine 142, glutamine 223, threonine 238, and arginine 302. The active-site Proton donor is histidine 41. Threonine 298 to arginine 304 is a substrate binding site. Residues arginine 304, lysine 330–aspartate 332, and serine 412–glycine 414 each bind GTP.

Belongs to the adenylosuccinate synthetase family. As to quaternary structure, homodimer. Mg(2+) is required as a cofactor.

It localises to the cytoplasm. The catalysed reaction is IMP + L-aspartate + GTP = N(6)-(1,2-dicarboxyethyl)-AMP + GDP + phosphate + 2 H(+). The protein operates within purine metabolism; AMP biosynthesis via de novo pathway; AMP from IMP: step 1/2. In terms of biological role, plays an important role in the de novo pathway of purine nucleotide biosynthesis. Catalyzes the first committed step in the biosynthesis of AMP from IMP. The chain is Adenylosuccinate synthetase from Synechococcus sp. (strain ATCC 27144 / PCC 6301 / SAUG 1402/1) (Anacystis nidulans).